Consider the following 315-residue polypeptide: Porphobilinogen deaminase (315 aa).

At C234 the chain carries S-(dipyrrolylmethanemethyl)cysteine.

It belongs to the HMBS family. As to quaternary structure, monomer. Dipyrromethane is required as a cofactor.

The enzyme catalyses 4 porphobilinogen + H2O = hydroxymethylbilane + 4 NH4(+). It participates in porphyrin-containing compound metabolism; protoporphyrin-IX biosynthesis; coproporphyrinogen-III from 5-aminolevulinate: step 2/4. Functionally, tetrapolymerization of the monopyrrole PBG into the hydroxymethylbilane pre-uroporphyrinogen in several discrete steps. This chain is Porphobilinogen deaminase, found in Mycobacterium avium (strain 104).